A 504-amino-acid polypeptide reads, in one-letter code: Glycerol kinase (504 aa).

T14 contacts ADP. Positions 14, 15, and 16 each coordinate ATP. T14 contacts sn-glycerol 3-phosphate. R18 contributes to the ADP binding site. Sn-glycerol 3-phosphate is bound by residues R84, E85, Y136, and D246. 5 residues coordinate glycerol: R84, E85, Y136, D246, and Q247. 2 residues coordinate ADP: T268 and G311. ATP-binding residues include T268, G311, Q315, and G412. ADP is bound by residues G412 and N416.

The protein belongs to the FGGY kinase family.

The enzyme catalyses glycerol + ATP = sn-glycerol 3-phosphate + ADP + H(+). Its pathway is polyol metabolism; glycerol degradation via glycerol kinase pathway; sn-glycerol 3-phosphate from glycerol: step 1/1. Its activity is regulated as follows. Inhibited by fructose 1,6-bisphosphate (FBP). Key enzyme in the regulation of glycerol uptake and metabolism. Catalyzes the phosphorylation of glycerol to yield sn-glycerol 3-phosphate. The chain is Glycerol kinase from Aliivibrio salmonicida (strain LFI1238) (Vibrio salmonicida (strain LFI1238)).